Here is a 388-residue protein sequence, read N- to C-terminus: MNQQELFDKYQDTFAAQGQDLFFSPGRINVIGEHTDYNGGHVFPCAISLGTYGVYGVRDDDQVQLFSGNMEGDVVSFAITDEAPEEAEDRKWANYFKGMLVYLRQKGFKIDHGFNLYVYGNLPYGAGLSSSASIEMLMGQVLKDEFNLDIDQIDLVKLGQKTENDFVGLNSGIMDQFAVGMGKKDNAIFLDCNTLEYKYMPLELGDYEIVIMSTNKKHSLAASAYNDRVAECGEALKRLQTKLDINSLGEIDEDTFDEYSYLLNDETLLKRTRHAVFENQRTIQATKAMTDGDLEKLGRLINASHVSLHFDYEVSGTELDTLAEAAWQQPGVLGARMIGGGFAGSAIAIVKKDQAENLKQKVGEIYREKVGYDASFYDAEIVDGPHKL.

33–36 (EHTD) is a substrate binding site. ATP contacts are provided by residues serine 67 and 125–131 (GAGLSSS). Mg(2+) is bound by residues serine 131 and glutamate 163. Aspartate 175 functions as the Proton acceptor in the catalytic mechanism. Tyrosine 225 contacts substrate.

The protein belongs to the GHMP kinase family. GalK subfamily.

It is found in the cytoplasm. The catalysed reaction is alpha-D-galactose + ATP = alpha-D-galactose 1-phosphate + ADP + H(+). The protein operates within carbohydrate metabolism; galactose metabolism. In terms of biological role, catalyzes the transfer of the gamma-phosphate of ATP to D-galactose to form alpha-D-galactose-1-phosphate (Gal-1-P). The protein is Galactokinase of Limosilactobacillus fermentum (strain NBRC 3956 / LMG 18251) (Lactobacillus fermentum).